The following is a 476-amino-acid chain: Eukaryotic translation initiation factor 3 subunit L (476 aa).

One can recognise a PCI domain in the interval 257 to 452 (DAIRMFSHIL…DLDYALEKDL (196 aa)).

This sequence belongs to the eIF-3 subunit L family. As to quaternary structure, component of the eukaryotic translation initiation factor 3 (eIF-3) complex.

It is found in the cytoplasm. Functionally, component of the eukaryotic translation initiation factor 3 (eIF-3) complex, which is involved in protein synthesis of a specialized repertoire of mRNAs and, together with other initiation factors, stimulates binding of mRNA and methionyl-tRNAi to the 40S ribosome. The eIF-3 complex specifically targets and initiates translation of a subset of mRNAs involved in cell proliferation. In Aspergillus terreus (strain NIH 2624 / FGSC A1156), this protein is Eukaryotic translation initiation factor 3 subunit L.